The chain runs to 186 residues: RIO-type serine/threonine-protein kinase Rio1 (186 aa).

Residue Lys-15 coordinates ATP. Residue Asp-124 is the Proton acceptor of the active site. The Mg(2+) site is built by Asn-129 and Asp-140. The active-site 4-aspartylphosphate intermediate is the Asp-140.

It belongs to the protein kinase superfamily. RIO-type Ser/Thr kinase family.

The enzyme catalyses L-seryl-[protein] + ATP = O-phospho-L-seryl-[protein] + ADP + H(+). It carries out the reaction L-threonyl-[protein] + ATP = O-phospho-L-threonyl-[protein] + ADP + H(+). It catalyses the reaction ATP + H2O = ADP + phosphate + H(+). In terms of biological role, despite the protein kinase domain is proposed to act predominantly as an ATPase. The sequence is that of RIO-type serine/threonine-protein kinase Rio1 (rio1) from Thermoplasma acidophilum (strain ATCC 25905 / DSM 1728 / JCM 9062 / NBRC 15155 / AMRC-C165).